A 417-amino-acid chain; its full sequence is NADH-quinone oxidoreductase subunit D (417 aa).

Belongs to the complex I 49 kDa subunit family. NDH-1 is composed of 14 different subunits. Subunits NuoB, C, D, E, F, and G constitute the peripheral sector of the complex.

The protein resides in the cell membrane. It catalyses the reaction a quinone + NADH + 5 H(+)(in) = a quinol + NAD(+) + 4 H(+)(out). Its function is as follows. NDH-1 shuttles electrons from NADH, via FMN and iron-sulfur (Fe-S) centers, to quinones in the respiratory chain. The immediate electron acceptor for the enzyme in this species is believed to be ubiquinone. Couples the redox reaction to proton translocation (for every two electrons transferred, four hydrogen ions are translocated across the cytoplasmic membrane), and thus conserves the redox energy in a proton gradient. This is NADH-quinone oxidoreductase subunit D from Polynucleobacter asymbioticus (strain DSM 18221 / CIP 109841 / QLW-P1DMWA-1) (Polynucleobacter necessarius subsp. asymbioticus).